The following is a 345-amino-acid chain: Anthranilate phosphoribosyltransferase (345 aa).

5-phospho-alpha-D-ribose 1-diphosphate-binding positions include Gly84, 87-88 (GD), Thr92, 94-97 (NIST), 112-120 (KHGNRSVSS), and Ser124. Anthranilate is bound at residue Gly84. Residue Ser96 participates in Mg(2+) binding. Asn115 serves as a coordination point for anthranilate. Arg170 serves as a coordination point for anthranilate. Asp229 and Glu230 together coordinate Mg(2+).

This sequence belongs to the anthranilate phosphoribosyltransferase family. As to quaternary structure, homodimer. Mg(2+) serves as cofactor.

It carries out the reaction N-(5-phospho-beta-D-ribosyl)anthranilate + diphosphate = 5-phospho-alpha-D-ribose 1-diphosphate + anthranilate. The protein operates within amino-acid biosynthesis; L-tryptophan biosynthesis; L-tryptophan from chorismate: step 2/5. In terms of biological role, catalyzes the transfer of the phosphoribosyl group of 5-phosphorylribose-1-pyrophosphate (PRPP) to anthranilate to yield N-(5'-phosphoribosyl)-anthranilate (PRA). This chain is Anthranilate phosphoribosyltransferase, found in Xanthomonas euvesicatoria pv. vesicatoria (strain 85-10) (Xanthomonas campestris pv. vesicatoria).